The primary structure comprises 250 residues: UDP-2,3-diacylglucosamine hydrolase (250 aa).

Asp7, His9, Asp40, Asn78, and His113 together coordinate Mn(2+). 78 to 79 serves as a coordination point for substrate; sequence NR. Asp121, Ser159, Thr163, Lys166, and His194 together coordinate substrate. Mn(2+) contacts are provided by His194 and His196.

Belongs to the LpxH family. Requires Mn(2+) as cofactor.

It localises to the cell inner membrane. It carries out the reaction UDP-2-N,3-O-bis[(3R)-3-hydroxytetradecanoyl]-alpha-D-glucosamine + H2O = 2-N,3-O-bis[(3R)-3-hydroxytetradecanoyl]-alpha-D-glucosaminyl 1-phosphate + UMP + 2 H(+). Its pathway is glycolipid biosynthesis; lipid IV(A) biosynthesis; lipid IV(A) from (3R)-3-hydroxytetradecanoyl-[acyl-carrier-protein] and UDP-N-acetyl-alpha-D-glucosamine: step 4/6. Functionally, hydrolyzes the pyrophosphate bond of UDP-2,3-diacylglucosamine to yield 2,3-diacylglucosamine 1-phosphate (lipid X) and UMP by catalyzing the attack of water at the alpha-P atom. Involved in the biosynthesis of lipid A, a phosphorylated glycolipid that anchors the lipopolysaccharide to the outer membrane of the cell. The protein is UDP-2,3-diacylglucosamine hydrolase of Pseudomonas fluorescens (strain ATCC BAA-477 / NRRL B-23932 / Pf-5).